Consider the following 212-residue polypeptide: Thylakoid membrane protein slr1949 (212 aa).

Residues Trp-109–Trp-131 traverse the membrane as a helical segment. Positions Pro-180–Leu-212 form a coiled coil.

It localises to the cellular thylakoid membrane. This is Thylakoid membrane protein slr1949 from Synechocystis sp. (strain ATCC 27184 / PCC 6803 / Kazusa).